The chain runs to 488 residues: 3-octaprenyl-4-hydroxybenzoate carboxy-lyase (488 aa).

Asparagine 172 is a binding site for Mn(2+). Residues 175–177, 189–191, and 194–195 contribute to the prenylated FMN site; these read IYR, RWL, and RG. Glutamate 238 contacts Mn(2+). The Proton donor role is filled by aspartate 287.

This sequence belongs to the UbiD family. As to quaternary structure, homohexamer. Prenylated FMN is required as a cofactor. It depends on Mn(2+) as a cofactor.

It is found in the cell membrane. It catalyses the reaction a 4-hydroxy-3-(all-trans-polyprenyl)benzoate + H(+) = a 2-(all-trans-polyprenyl)phenol + CO2. Its pathway is cofactor biosynthesis; ubiquinone biosynthesis. Catalyzes the decarboxylation of 3-octaprenyl-4-hydroxy benzoate to 2-octaprenylphenol, an intermediate step in ubiquinone biosynthesis. This is 3-octaprenyl-4-hydroxybenzoate carboxy-lyase from Ectopseudomonas mendocina (strain ymp) (Pseudomonas mendocina).